Consider the following 395-residue polypeptide: MKRDYYEVLGVGRSATKDEIKKAYRKLAMKYHPDKNPDNSEAEEKFKEANEAYEVLSNDDKRRRYDQFGHAGVGSSASSQGGPFGGGGTGDLGDIFSAFNDMFGGGARGGGSPFGFEDVFSGGGGRRSRSAGVSGSDLKIRLKLSLEEIAKGVEKTLKIKKQVACDVCNGTGSKTGELETCPTCQGTGEVRQASKTMFGQFVNIAACPTCGGEGRVVKERCTACHGEGIKQGETTVKVNIPAGVEDGNYLTLRGQGNAGPRGGMNGDLIVVIEEVEHKIFARRGDDVVYNLTLSYADMVLGTKVDIPTLEGRVKMTVPPATQPNTVLRISAKGIGHLKAPGRGDHLVRVNVFVPKDPSHQDKELLKELNKSVHMVPDEKKEHEKGFYEKVKDIFS.

The J domain maps to 4–69; that stretch reads DYYEVLGVGR…DKRRRYDQFG (66 aa). The segment at 152-233 adopts a CR-type zinc-finger fold; it reads GVEKTLKIKK…CHGEGIKQGE (82 aa). Zn(2+)-binding residues include cysteine 165, cysteine 168, cysteine 181, cysteine 184, cysteine 207, cysteine 210, cysteine 221, and cysteine 224. CXXCXGXG motif repeat units lie at residues 165-172, 181-188, 207-214, and 221-228; these read CDVCNGTG, CPTCQGTG, CPTCGGEG, and CTACHGEG.

This sequence belongs to the DnaJ family. As to quaternary structure, homodimer. It depends on Zn(2+) as a cofactor.

It is found in the cytoplasm. Its function is as follows. Participates actively in the response to hyperosmotic and heat shock by preventing the aggregation of stress-denatured proteins and by disaggregating proteins, also in an autonomous, DnaK-independent fashion. Unfolded proteins bind initially to DnaJ; upon interaction with the DnaJ-bound protein, DnaK hydrolyzes its bound ATP, resulting in the formation of a stable complex. GrpE releases ADP from DnaK; ATP binding to DnaK triggers the release of the substrate protein, thus completing the reaction cycle. Several rounds of ATP-dependent interactions between DnaJ, DnaK and GrpE are required for fully efficient folding. Also involved, together with DnaK and GrpE, in the DNA replication of plasmids through activation of initiation proteins. The chain is Chaperone protein DnaJ from Prosthecochloris aestuarii (strain DSM 271 / SK 413).